Reading from the N-terminus, the 163-residue chain is Superoxide dismutase [Mn] (163 aa).

His2, His50, Asp134, and His138 together coordinate Mn(2+).

It belongs to the iron/manganese superoxide dismutase family. Mn(2+) is required as a cofactor.

It catalyses the reaction 2 superoxide + 2 H(+) = H2O2 + O2. In terms of biological role, destroys superoxide anion radicals which are normally produced within the cells and which are toxic to biological systems. The polypeptide is Superoxide dismutase [Mn] (sodA) (Mycobacterium kansasii).